We begin with the raw amino-acid sequence, 639 residues long: Protein sly1 homolog (639 aa).

4 consecutive repeat copies span residues 85 to 121 (DENL…NLAA), 203 to 245 (RNSA…FSFQ), 423 to 460 (LDLL…ERLK), and 464 to 500 (QAAG…GGGT). The 4 X approximate repeats stretch occupies residues 85-500 (DENLDRIQQD…QATQYEGGGT (416 aa)).

It belongs to the STXBP/unc-18/SEC1 family. In terms of tissue distribution, in embryos, from stage 14, expression is seen in posterior midgut, esophagus and salivary glands. No expression is seen in larval imaginal disks.

It is found in the cytoplasm. The protein localises to the membrane. In terms of biological role, non-vital for development. In Drosophila melanogaster (Fruit fly), this protein is Protein sly1 homolog (Slh).